Consider the following 496-residue polypeptide: MNRSALDFRHFVDHLRRQGDLVDVHTEVDANLEIGAITRRVYERRAPAPLFHNIRDSLPGARVLGAPAGLRADRARAHSRLALHFGLPEHSGPRDIVAMLRAAMRAEPIAPRRLERGPVQENVWLGEQVDLTRFPVPLLHEQDGGRYFGTYGFHVVQTPDGSWDSWSVGRLMLVDRNTLAGPTIPTQHIGIIREQWRRLGKPTPWAMALGAPPAALAAAGMPLPEGVSEAGYVGALVGEPVEVVRTQTNGLWVPANTEIVLEGEISLDETALEGPMGEYHGYSFPIGKPQPLFHVHALSFRDQPILPICVAGTPPEENHTIWGTMISAQLLDVAQNAGLPVDMVWCSYEAATCWAVLSIDVQRLAALGTDAAAFAARVAETVFGSHAGHLVPKLILVGNDIDVTEIDQVVWALATRAHPLHDHFAFPQIRDFPMVPYLDAEDKARGSGGRLVINCLYPEQFAGQMRAATASFRHAYPTALRRRVEERWSDYGFGDA.

Tryptophan 166 contacts K(+). The prenylated FMN site is built by valine 168, arginine 170, glutamine 187, and histidine 188. Histidine 188 contributes to the Mn(2+) binding site. Residues alanine 218, alanine 219, methionine 221, and glutamate 229 each coordinate K(+). Residue glutamate 229 coordinates prenylated FMN. Glutamate 229 lines the Mn(2+) pocket. Residue glutamate 278 is the Proton donor of the active site. Histidine 386 is a binding site for prenylated FMN.

The protein belongs to the UbiD family. UbiD-like/FDC subfamily. In terms of assembly, homodimer. The cofactor is prenylated FMN. It depends on Mn(2+) as a cofactor. K(+) serves as cofactor.

The enzyme catalyses pyrrole-2-carboxylate + H(+) = 1H-pyrrole + CO2. The catalysed reaction is pyrrole-2-carboxylate + H2O = 1H-pyrrole + hydrogencarbonate. With respect to regulation, imidazole acts as a reversible inhibitor via the formation of an imidazole-prenyl-FMN adduct. Activity is light sensitive. Catalyzes the prenyl-FMN-dependent decarboxylation of pyrrole-2-carboxylate (P2C). Can also catalyze the carboxylation of pyrrole in the presence of elevated concentrations of CO(2) or bicarbonate. Can accept a modest range of heteroaromatic compounds such as 3-methylpyrrole-2-carboxylate, indole-3-carboxylate and furan-2-carboxylate, and shows very low activity with thiophene-2-carboxylate. Attenuates the virulence of P.aeruginosa in a Drosophila model when overexpressed. The chain is Pyrrole-2-carboxylic acid decarboxylase from Pseudomonas aeruginosa (strain ATCC 15692 / DSM 22644 / CIP 104116 / JCM 14847 / LMG 12228 / 1C / PRS 101 / PAO1).